An 889-amino-acid chain; its full sequence is A disintegrin and metalloproteinase with thrombospondin motifs 8 (889 aa).

Residues 1–26 (MLPAPAAPRWPPLLLLLLLLLPLARG) form the signal peptide. A propeptide spanning residues 27-213 (APARPAAGGQ…PLGATSRTKR (187 aa)) is cleaved from the precursor. Residues 138-210 (QGAGGSLAQP…PPPPLGATSR (73 aa)) form a disordered region. A compositionally biased stretch (basic and acidic residues) spans 173–183 (EGQRQERGDHQ). Acidic residues predominate over residues 184 to 197 (EDSEEESQEEEAEG). The 211-residue stretch at 219–429 (RFVETLLVAD…GHGDCLLDAP (211 aa)) folds into the Peptidase M12B domain. 11 disulfide bridges follow: Cys-294–Cys-347, Cys-323–Cys-329, Cys-341–Cys-424, Cys-379–Cys-408, Cys-452–Cys-477, Cys-463–Cys-486, Cys-472–Cys-507, Cys-501–Cys-512, Cys-538–Cys-575, Cys-542–Cys-580, and Cys-553–Cys-565. Asn-344 carries N-linked (GlcNAc...) asparagine glycosylation. His-363 contributes to the Zn(2+) binding site. Residue Glu-364 is part of the active site. Zn(2+) is bound by residues His-367 and His-373. N-linked (GlcNAc...) asparagine glycans are attached at residues Asn-400, Asn-465, and Asn-490. The Disintegrin domain occupies 438-525 (GLPGRMALYQ…EEVERPKPVA (88 aa)). The region spanning 526-581 (DGGWAPWGPWGECSRTCGGGVQFSHRECKDPEPQNGGRYCLGRRAKYQSCHTEECP) is the TSP type-1 1 domain. N-linked (GlcNAc...) asparagine glycosylation occurs at Asn-599. The spacer stretch occupies residues 690–831 (RKVSGSLTPT…RATTNIIQPL (142 aa)). The TSP type-1 2 domain maps to 833 to 888 (HAQWVLGDWSECSSTCGAGWQRRTVECRDPSGQASATCNKALKPEDAKPCESQLCP).

The cofactor is Zn(2+). Post-translationally, the precursor is cleaved by a furin endopeptidase. In terms of processing, glycosylated. Can be O-fucosylated by POFUT2 on a serine or a threonine residue found within the consensus sequence C1-X(2)-(S/T)-C2-G of the TSP type-1 repeat domains where C1 and C2 are the first and second cysteine residue of the repeat, respectively. Fucosylated repeats can then be further glycosylated by the addition of a beta-1,3-glucose residue by the glucosyltransferase, B3GALTL. Fucosylation mediates the efficient secretion of ADAMTS family members. Can also be C-glycosylated with one or two mannose molecules on tryptophan residues within the consensus sequence W-X-X-W of the TPRs, and N-glycosylated. These other glycosylations can also facilitate secretion. In terms of tissue distribution, highly expressed in adult and fetal lung, lower expression in brain, placenta, heart, stomach and fetal brain and kidney.

It localises to the secreted. The protein localises to the extracellular space. Its subcellular location is the extracellular matrix. In terms of biological role, has anti-angiogenic properties. This chain is A disintegrin and metalloproteinase with thrombospondin motifs 8 (ADAMTS8), found in Homo sapiens (Human).